The chain runs to 375 residues: D-alanine--D-alanine ligase (375 aa).

The region spanning 145-348 (KRLLRDADLE…YPALITRLIE (204 aa)) is the ATP-grasp domain. ATP is bound at residue 175–230 (ITYLGSSLFVKPANQGSSVGVSKVINRISFDQALALAFCFDDKVLVESAINGRELE). Mg(2+) is bound by residues Asp302, Glu315, and Asn317.

Belongs to the D-alanine--D-alanine ligase family. Mg(2+) is required as a cofactor. Mn(2+) serves as cofactor.

It is found in the cytoplasm. It carries out the reaction 2 D-alanine + ATP = D-alanyl-D-alanine + ADP + phosphate + H(+). It participates in cell wall biogenesis; peptidoglycan biosynthesis. In terms of biological role, cell wall formation. The protein is D-alanine--D-alanine ligase of Baumannia cicadellinicola subsp. Homalodisca coagulata.